The following is a 224-amino-acid chain: tRNA (guanine-N(7)-)-methyltransferase (224 aa).

S-adenosyl-L-methionine is bound by residues E54, E79, E106, and D129. The active site involves D129. Substrate is bound by residues K133 and D165.

It belongs to the class I-like SAM-binding methyltransferase superfamily. TrmB family.

It carries out the reaction guanosine(46) in tRNA + S-adenosyl-L-methionine = N(7)-methylguanosine(46) in tRNA + S-adenosyl-L-homocysteine. Its pathway is tRNA modification; N(7)-methylguanine-tRNA biosynthesis. Catalyzes the formation of N(7)-methylguanine at position 46 (m7G46) in tRNA. The protein is tRNA (guanine-N(7)-)-methyltransferase of Chlamydia muridarum (strain MoPn / Nigg).